A 310-amino-acid chain; its full sequence is Deoxyribonuclease gamma (310 aa).

An N-terminal signal peptide occupies residues 1–25 (MSLHPASPRLASLLLFILALHDTLA). A Bipartite nuclear localization signal motif is present at residues 40–56 (KKENHEAMDIIVKIIKR). Active-site residues include E105 and H160. C199 and C236 are disulfide-bonded. The not required for free DNA-nuclease activity but required for activity towards liposome-coated DNA stretch occupies residues 289–310 (SRAFTNNRKSVSLKKRKKGNRS). Residues 301–307 (LKKRKKG) carry the Nuclear localization signal motif.

The protein belongs to the DNase I family. The cofactor is Ca(2+). Mg(2+) is required as a cofactor. In terms of processing, poly-ADP-ribosylated by PARP1. ADP-ribosylation negatively regulates enzymatic activity during apoptosis. In terms of tissue distribution, expressed at high levels in liver, spleen and testes. Expressed at lower levels in heart, lungs, skeletal muscle and kidney. Not expressed in brain. Predominantly expressed in macrophages; at protein level. Secreted by mononuclear phagocytes.

It is found in the nucleus. It localises to the endoplasmic reticulum. The protein localises to the secreted. With respect to regulation, inhibited by zinc. Inhibited by heparin and proteolysis by plasmin. Has DNA hydrolytic activity. Is capable of both single- and double-stranded DNA cleavage, producing DNA fragments with 3'-OH ends. Can cleave chromatin to nucleosomal units and cleaves nucleosomal and liposome-coated DNA. Acts in internucleosomal DNA fragmentation (INDF) during apoptosis and necrosis. The role in apoptosis includes myogenic and neuronal differentiation, and BCR-mediated clonal deletion of self-reactive B cells. Is active on chromatin in apoptotic cell-derived membrane-coated microparticles and thus suppresses anti-DNA autoimmunity. Together with DNASE1, plays a key role in degrading neutrophil extracellular traps (NETs). NETs are mainly composed of DNA fibers and are released by neutrophils to bind pathogens during inflammation. Degradation of intravascular NETs by DNASE1 and DNASE1L3 is required to prevent formation of clots that obstruct blood vessels and cause organ damage following inflammation. This chain is Deoxyribonuclease gamma, found in Mus musculus (Mouse).